Reading from the N-terminus, the 367-residue chain is Voltage-gated potassium channel subunit beta-2 (367 aa).

Phosphoserine is present on residues Ser-9, Ser-14, and Ser-20. Residue Arg-28 is modified to Asymmetric dimethylarginine; alternate. Position 28 is an omega-N-methylarginine; alternate (Arg-28). Ser-31 carries the post-translational modification Phosphoserine. NADP(+) contacts are provided by Thr-56, Trp-57, Gln-63, and Asp-85. The active-site Proton donor/acceptor is Tyr-90. The residue at position 112 (Ser-112) is a Phosphoserine. Residue Lys-124 is modified to N6-acetyllysine. NADP(+) contacts are provided by Asn-158, Ser-188, Arg-189, Gln-214, Trp-243, Ser-244, Pro-245, Leu-246, Ala-247, Cys-248, Lys-254, Tyr-262, Arg-264, Gly-323, Ser-325, Gln-329, Glu-332, and Asn-333.

The protein belongs to the shaker potassium channel beta subunit family. As to quaternary structure, homotetramer. Interaction with tetrameric potassium channel alpha subunits gives rise to a heterooctamer. Identified in potassium channel complexes containing KCNA1, KCNA2, KCNA4, KCNA5, KCNA6, KCNAB1, KCNAB2 and KCND3. Interacts (in unphosphorylated form) with MAPRE1. Forms a ternary complex with SQSTM1 and PRKCZ. Post-translationally, phosphorylated by PRKCZ; may be regulated by incorporation in a complex composed of PRKCZ and SQSTM1. As to expression, detected in brain. Detected at basket cell terminals in cerebellum and in the juxtaparanodal region of nodes of Ranvier (at protein level). Strongest expression in brain and eye. Highest levels in brain detected in brainstem and diencephalon. Strong expression also detected in lung and heart. Moderate expression in kidney, T-lymphocytes and skeletal muscle.

The protein resides in the cytoplasm. The protein localises to the membrane. It is found in the cell membrane. Its subcellular location is the cell projection. It localises to the axon. The protein resides in the synapse. The protein localises to the synaptosome. It is found in the cytoskeleton. The catalysed reaction is hydroxyacetone + NADP(+) = methylglyoxal + NADPH + H(+). It catalyses the reaction (E)-4-oxonon-2-en-1-ol + NADP(+) = (E)-4-oxonon-2-enal + NADPH + H(+). Functionally, regulatory subunit of the voltage-gated potassium (Kv) Shaker channel family. Shaker channels are composed of pore-forming and potassium-conducting alpha subunits and of regulatory beta subunits. The beta-2/KCNAB2 subunit promotes potassium channel closure via a mechanism that does not involve physical obstruction of the channel pore. Promotes the inactivation of Kv1.4/KCNA4 and Kv1.5/KCNA5 alpha subunit-containing channels. Displays nicotinamide adenine dinucleotide phosphate (NADPH)-dependent aldoketoreductase activity by catalyzing the NADPH-dependent reduction of a wide range of aldehyde and ketone substrates. Substrate specificity includes methylglyoxal, 9,10-phenanthrenequinone, prostaglandin J2, 4-nitrobenzaldehyde, 4-nitroacetophenone and 4-oxo-trans-2-nonenal (in vitro, no physiological substrate identified yet). The binding of oxidized and reduced nucleotide cofactors alters Kv channel gating and may contribute to dynamic fine tuning of cell excitability. Contributes to the regulation of nerve signaling, and prevents neuronal hyperexcitability. This Mus musculus (Mouse) protein is Voltage-gated potassium channel subunit beta-2.